Reading from the N-terminus, the 812-residue chain is Leucine--tRNA ligase (812 aa).

The short motif at 40 to 51 (SYPSGSNLHAGH) is the 'HIGH' region element. The short motif at 572 to 576 (KMSKS) is the 'KMSKS' region element. An ATP-binding site is contributed by Lys-575.

It belongs to the class-I aminoacyl-tRNA synthetase family.

It localises to the cytoplasm. The catalysed reaction is tRNA(Leu) + L-leucine + ATP = L-leucyl-tRNA(Leu) + AMP + diphosphate. In Clostridium tetani (strain Massachusetts / E88), this protein is Leucine--tRNA ligase.